The chain runs to 176 residues: Telomerase RNA component interacting RNase (176 aa).

A compositionally biased stretch (basic and acidic residues) spans 1–12 (MAARGRRAEPQG). The tract at residues 1 to 121 (MAARGRRAEP…TLSFVGKRRG (121 aa)) is disordered. Residues 45 to 56 (SGAGSSPVSGGV) show a composition bias toward low complexity. Positions 68–83 (LFKRKMEEEQRQRQEE) are enriched in basic and acidic residues. A compositionally biased stretch (low complexity) spans 90 to 101 (RPDQSAAAAGPG). Position 146 is an N6-acetyllysine (Lys146).

As to quaternary structure, part of the telomerase RNA 3' end complex which contains about 488 proteins.

Its activity is regulated as follows. Zn(2+) inhibits the RNase activity while Mg(2+), Ca(2+), Mn(2+), K(+), Na(+), EDTA and EGTA show little effect on the exoribonuclease activity. Functionally, exoribonuclease that is part of the telomerase RNA 3' end processing complex and which has the ability to cleave all four unpaired RNA nucleotides from the 5' end or 3' end with higher efficiency for purine bases. In Homo sapiens (Human), this protein is Telomerase RNA component interacting RNase.